The primary structure comprises 435 residues: Glutamate-1-semialdehyde 2,1-aminomutase (435 aa).

The residue at position 266 (Lys-266) is an N6-(pyridoxal phosphate)lysine.

The protein belongs to the class-III pyridoxal-phosphate-dependent aminotransferase family. HemL subfamily. Homodimer. Requires pyridoxal 5'-phosphate as cofactor.

It localises to the cytoplasm. It carries out the reaction (S)-4-amino-5-oxopentanoate = 5-aminolevulinate. The protein operates within porphyrin-containing compound metabolism; protoporphyrin-IX biosynthesis; 5-aminolevulinate from L-glutamyl-tRNA(Glu): step 2/2. In Coxiella burnetii (strain CbuK_Q154) (Coxiella burnetii (strain Q154)), this protein is Glutamate-1-semialdehyde 2,1-aminomutase.